The primary structure comprises 162 residues: 2-C-methyl-D-erythritol 2,4-cyclodiphosphate synthase (162 aa).

A divalent metal cation-binding residues include Asp-10 and His-12. Residues Asp-10–His-12 and His-36–Ser-37 contribute to the 4-CDP-2-C-methyl-D-erythritol 2-phosphate site. His-44 is an a divalent metal cation binding site. Residues Asp-58–Gly-60, Phe-63–Asp-67, and Arg-144 each bind 4-CDP-2-C-methyl-D-erythritol 2-phosphate.

The protein belongs to the IspF family. As to quaternary structure, homotrimer. The cofactor is a divalent metal cation.

It carries out the reaction 4-CDP-2-C-methyl-D-erythritol 2-phosphate = 2-C-methyl-D-erythritol 2,4-cyclic diphosphate + CMP. It functions in the pathway isoprenoid biosynthesis; isopentenyl diphosphate biosynthesis via DXP pathway; isopentenyl diphosphate from 1-deoxy-D-xylulose 5-phosphate: step 4/6. Functionally, involved in the biosynthesis of isopentenyl diphosphate (IPP) and dimethylallyl diphosphate (DMAPP), two major building blocks of isoprenoid compounds. Catalyzes the conversion of 4-diphosphocytidyl-2-C-methyl-D-erythritol 2-phosphate (CDP-ME2P) to 2-C-methyl-D-erythritol 2,4-cyclodiphosphate (ME-CPP) with a corresponding release of cytidine 5-monophosphate (CMP). The protein is 2-C-methyl-D-erythritol 2,4-cyclodiphosphate synthase of Burkholderia thailandensis (strain ATCC 700388 / DSM 13276 / CCUG 48851 / CIP 106301 / E264).